Here is a 165-residue protein sequence, read N- to C-terminus: uncharacterized protein (165 aa).

6 consecutive transmembrane segments (helical) span residues 6-26 (ILFP…SGQA), 28-48 (LFSG…AFVY), 54-74 (AVTP…HFFA), 78-98 (WVWW…SLLV), 110-130 (AVSM…MAWL), and 138-158 (ALLK…LLLI).

It is found in the cell membrane. This is an uncharacterized protein from Bacillus subtilis (strain 168).